We begin with the raw amino-acid sequence, 284 residues long: tRNA uridine(34) hydroxylase (284 aa).

The Rhodanese domain maps to 132-226 (TGRPVVMLDT…YFEEVGGAHY (95 aa)). Catalysis depends on C186, which acts as the Cysteine persulfide intermediate.

Belongs to the TrhO family.

The enzyme catalyses uridine(34) in tRNA + AH2 + O2 = 5-hydroxyuridine(34) in tRNA + A + H2O. Functionally, catalyzes oxygen-dependent 5-hydroxyuridine (ho5U) modification at position 34 in tRNAs. This chain is tRNA uridine(34) hydroxylase, found in Burkholderia cenocepacia (strain ATCC BAA-245 / DSM 16553 / LMG 16656 / NCTC 13227 / J2315 / CF5610) (Burkholderia cepacia (strain J2315)).